The chain runs to 1201 residues: Vitamin B12-dependent ribonucleotide reductase (1201 aa).

Substrate contacts are provided by residues S153, 198 to 199, G230, 482 to 486, and 683 to 687; these read AC, NPCSE, and PTGTI. C199 and C495 are disulfide-bonded. N482 functions as the Proton acceptor in the catalytic mechanism. Residue C484 is the Cysteine radical intermediate of the active site. The active-site Proton acceptor is E486. Positions 1100–1118 are enriched in basic and acidic residues; sequence DEIGSKRATAESNGQEKET. Positions 1100–1120 are disordered; sequence DEIGSKRATAESNGQEKETLS.

The protein belongs to the ribonucleoside diphosphate reductase class-2 family. Adenosylcob(III)alamin is required as a cofactor.

It carries out the reaction a 2'-deoxyribonucleoside 5'-diphosphate + [thioredoxin]-disulfide + H2O = a ribonucleoside 5'-diphosphate + [thioredoxin]-dithiol. Its function is as follows. Catalyzes the reduction of ribonucleotides to deoxyribonucleotides. May function to provide a pool of deoxyribonucleotide precursors for DNA repair during oxygen limitation and/or for immediate growth after restoration of oxygen. In Leptospira interrogans serogroup Icterohaemorrhagiae serovar copenhageni (strain Fiocruz L1-130), this protein is Vitamin B12-dependent ribonucleotide reductase (nrdJ).